We begin with the raw amino-acid sequence, 313 residues long: Protoheme IX farnesyltransferase (313 aa).

9 helical membrane passes run 22–42 (FALL…VGLM), 46–66 (IGVH…GGGA), 98–118 (GEAL…LALA), 121–141 (VFAG…YTMW), 150–170 (IVIG…AATG), 177–197 (WLMF…LALF), 223–243 (ILVY…TSVG), 246–266 (IYLT…VQIW), and 284–304 (FFKL…AEAL).

Belongs to the UbiA prenyltransferase family. Protoheme IX farnesyltransferase subfamily. Interacts with CtaA.

The protein localises to the cell inner membrane. The catalysed reaction is heme b + (2E,6E)-farnesyl diphosphate + H2O = Fe(II)-heme o + diphosphate. It functions in the pathway porphyrin-containing compound metabolism; heme O biosynthesis; heme O from protoheme: step 1/1. In terms of biological role, converts heme B (protoheme IX) to heme O by substitution of the vinyl group on carbon 2 of heme B porphyrin ring with a hydroxyethyl farnesyl side group. The protein is Protoheme IX farnesyltransferase of Ruegeria sp. (strain TM1040) (Silicibacter sp.).